We begin with the raw amino-acid sequence, 640 residues long: Dextranase (640 aa).

Residues 1 to 32 (MPGTGLGRLAKHVTAAAAVFLISTGAVLPAQA) form the signal peptide.

It belongs to the glycosyl hydrolase 49 family.

The protein localises to the secreted. The catalysed reaction is Endohydrolysis of (1-&gt;6)-alpha-D-glucosidic linkages in dextran.. This chain is Dextranase, found in Arthrobacter globiformis.